Reading from the N-terminus, the 385-residue chain is Isomaltose glucohydrolase (385 aa).

Tryptophan 125 is a substrate binding site. The active-site Proton acceptor is the aspartate 175. Residue glutamate 178 is the Proton donor of the active site. Catalysis depends on glutamate 335, which acts as the Proton acceptor.

This sequence belongs to the glycosyl hydrolase 15 family.

It localises to the cytoplasm. The enzyme catalyses isomaltose + H2O = beta-D-glucose + D-glucose. In terms of biological role, involved in the intracellular degradation of the cyclic tetrasaccharide cyclobis-(1-6)-alpha-nigerosyl (CNN) formed extracellularly from starch. Catalyzes the hydrolysis of alpha-1,6-glucosidic linkage from the non-reducing end of isomaltose to yield beta-D-glucose and D-glucose. Can also act on panose and isomaltotriose at a lower rate. It displays low or no activity toward CNN and the general GH15 enzyme substrates such as maltose, soluble starch or dextran. In Kribbella flavida (strain DSM 17836 / JCM 10339 / NBRC 14399), this protein is Isomaltose glucohydrolase.